The sequence spans 826 residues: Golgin subfamily A member 6-like protein 25 (826 aa).

6 disordered regions span residues 1 to 100 (MWPQ…HQEA), 297 to 327 (QEQE…MRRQ), 345 to 425 (MHEQ…EMWR), 502 to 534 (QEEM…MWRQ), 547 to 646 (RQEE…EQEE), and 658 to 826 (QEEM…MQEH). The span at 31–52 (MSKETRQSKLAEAKEQLTDHHP) shows a compositional bias: basic and acidic residues. Polar residues-rich tracts occupy residues 53 to 63 (QTNPSVGTAAS) and 71 to 83 (NNGT…TSGG). A compositionally biased stretch (basic and acidic residues) spans 86-100 (SPEDEQKASHQHQEA). Positions 157-822 (LEQALSAVAT…EVRLRQQEEK (666 aa)) form a coiled coil. Composition is skewed to basic and acidic residues over residues 658 to 678 (QEEM…KMWE) and 686 to 826 (QEEK…MQEH).

Belongs to the GOLGA6 family.

The chain is Golgin subfamily A member 6-like protein 25 from Homo sapiens (Human).